We begin with the raw amino-acid sequence, 1475 residues long: Peroxidasin homolog (1475 aa).

An N-terminal signal peptide occupies residues 1–23 (MAVRPTRRCLLALLLCFAWWAMA). The region spanning 24-60 (VVASKQGAGCPSRCLCFRTTVRCMHLLLEAVPAVAPQ) is the LRRNT domain. Intrachain disulfides connect Cys-33–Cys-39 and Cys-37–Cys-46. LRR repeat units follow at residues 58–81 (APQT…AFRR), 82–105 (LRSL…AFED), 107–129 (ENLK…AFKG), 130–153 (LASL…SFQH), 154–177 (LPKL…TFSQ), and 179–201 (ESMK…LWLA). The 53-residue stretch at 189–241 (NALHCDCEILWLADLLKTYAQSGNAQAAATCEYPRRIQGRSVATITPEELNCE) folds into the LRRCT domain. 6 disulfide bridges follow: Cys-193-Cys-240, Cys-195-Cys-219, Cys-264-Cys-314, Cys-360-Cys-409, Cys-451-Cys-499, and Cys-543-Cys-591. 4 Ig-like C2-type domains span residues 243–329 (PRIT…QEVT), 339–425 (PTFV…AFII), 430–517 (PQFT…LTVQ), and 518–607 (PRVT…MVLS). Asn-387 is a glycosylation site (N-linked (GlcNAc...) asparagine). The LRR 7 repeat unit spans residues 402–425 (SDSGEYTCFASNSVDSIHATAFII). N-linked (GlcNAc...) asparagine glycans are attached at residues Asn-637, Asn-696, Asn-716, and Asn-728. 4 disulfides stabilise this stretch: Cys-720–Cys-882, Cys-729–Cys-745, Cys-844–Cys-854, and Cys-848–Cys-872. Asp-823 contributes to the heme b binding site. The active-site Proton acceptor is the His-824. Ca(2+) is bound at residue Asp-825. Ca(2+) is bound by residues Thr-904, Tyr-906, Asp-908, and Ser-910. An intrachain disulfide couples Cys-956 to Cys-967. Asn-961 is a glycosylation site (N-linked (GlcNAc...) asparagine). Heme b is bound by residues Glu-977 and His-1071. The stretch at 1148–1172 (ALDLAAINIQRGRDHGIPPYHDYRV) is one LRR 8 repeat. The residue at position 1173 (Tyr-1173) is a Phosphotyrosine. 2 cysteine pairs are disulfide-bonded: Cys-1174–Cys-1231 and Cys-1272–Cys-1298. The N-linked (GlcNAc...) asparagine glycan is linked to Asn-1175. Ser-1177 carries the phosphoserine modification. The LRR 9 repeat unit spans residues 1267-1288 (LARILCDNSDNITRVQQDVFRV). Residues Asn-1277 and Asn-1364 are each glycosylated (N-linked (GlcNAc...) asparagine). The segment at 1312 to 1407 (CCEDCRTRGQ…QINSLESRLS (96 aa)) is required in homotrimerization. One can recognise a VWFC domain in the interval 1409–1467 (TECVDDSGESHGGNTKWKKDPCTVCECKNGQITCFVEACQPAACPQPVKVEGACCPVCL).

It belongs to the peroxidase family. XPO subfamily. As to quaternary structure, homotrimer; disulfide-linked. The homotrimer form is predominant. Homooligomer; disulfide-linked. Oligomerization occurs intracellularly before C-terminal proteolytic cleavage. Interacts with PXDNL; this interaction inhibits the peroxidase activity of PXDN. The cofactor is Ca(2+). Requires heme b as cofactor. Processed by FURIN and the proteolytic processing largely depends on the peroxidase activity of PXDN. The proteolytic cleavage occurs after intracellular homotrimerization and releases into the extracellular matrix a large, catalytically active fragment and a smaller fragment consisting primarily of the C-terminal VWFC domain. The processing enhances both peroxidase activity and sulfilimine cross-links formation. In terms of tissue distribution, highly expressed in the cardiovascular system. In the embryo, expressed in the corneal epithelial layer. In the adult eyes, expressed in the corneal and lens epithelium. Expressed in lung.

The protein resides in the secreted. It is found in the extracellular space. Its subcellular location is the extracellular matrix. The protein localises to the endoplasmic reticulum. It localises to the cell surface. The protein resides in the basement membrane. The catalysed reaction is L-lysyl-[collagen] + L-methionyl-[collagen] + H2O2 = [collagen]-L-lysyl-N-S-L-methionyl-[collagen] + 2 H2O + H(+). It catalyses the reaction bromide + H2O2 = hypobromite + H2O. It carries out the reaction L-lysyl-[collagen] + L-methionyl-[collagen] + hypobromite = [collagen]-L-lysyl-N-S-L-methionyl-[collagen] + bromide + H2O + H(+). The enzyme catalyses (5R)-5-hydroxy-L-lysyl-[collagen] + L-methionyl-[collagen] + hypobromite = [collagen]-(5R)-5-hydroxy-L-lysyl-N-S-L-methionyl-[collagen] + bromide + H2O + H(+). The catalysed reaction is (5R)-5-hydroxy-L-lysyl-[collagen] + L-methionyl-[collagen] + H2O2 = [collagen]-(5R)-5-hydroxy-L-lysyl-N-S-L-methionyl-[collagen] + 2 H2O + H(+). It catalyses the reaction L-tyrosyl-[protein] + bromide + H2O2 + H(+) = 3-bromo-L-tyrosyl-[protein] + 2 H2O. It carries out the reaction hypobromite + L-tyrosyl-[protein] + H(+) = 3-bromo-L-tyrosyl-[protein] + H2O. With respect to regulation, thiocyanate inhibits the formation of 3-bromotyrosine. In terms of biological role, catalyzes the two-electron oxidation of bromide by hydrogen peroxide and generates hypobromite as a reactive intermediate which mediates the formation of sulfilimine cross-links between methionine and hydroxylysine residues within an uncross-linked collagen IV/COL4A1 NC1 hexamer. In turns, directly contributes to the collagen IV network-dependent fibronectin/FN and laminin assembly, which is required for full extracellular matrix (ECM)-mediated signaling. Thus, sulfilimine cross-links are essential for growth factor-induced cell proliferation and survival in endothelial cells, an event essential to basement membrane integrity. In addition, through the bromide oxidation, may promote tubulogenesis and induce angiogenesis through ERK1/2, Akt, and FAK pathways. Moreover brominates alpha2 collagen IV chain/COL4A2 at 'Tyr-1480' and leads to bromine enrichment of the basement membranes. In vitro, can also catalyze the two-electron oxidation of thiocyanate and iodide and these two substrates could effectively compete with bromide and thus inhibit the formation of sulfilimine bonds. Binds laminins. May play a role in the organization of eyeball structure and lens development during eye development. The polypeptide is Peroxidasin homolog (Mus musculus (Mouse)).